Consider the following 789-residue polypeptide: Disintegrin and metalloproteinase domain-containing protein 7 (789 aa).

The signal sequence occupies residues 1–25; that stretch reads MFPTGIFLMSVLISQMQGRGIVGVE. The propeptide occupies 26 to 176; it reads GQELVHPKKL…NYSCEGLNFT (151 aa). Asn84, Asn167, and Asn174 each carry an N-linked (GlcNAc...) asparagine glycan. The Extracellular segment spans residues 177–668; the sequence is KKSTLIDAKI…WGEALNLTSV (492 aa). One can recognise a Peptidase M12B domain in the interval 199 to 393; the sequence is KFIELFVVAD…QKPACILNNP (195 aa). Cystine bridges form between Cys310–Cys388, Cys350–Cys372, Cys352–Cys357, and Cys459–Cys479. Residues 401-487 form the Disintegrin domain; sequence YPFCGNKKVD…ECPKDESQAN (87 aa). Asn583, Asn628, and Asn664 each carry an N-linked (GlcNAc...) asparagine glycan. A helical transmembrane segment spans residues 669–689; sequence SIMVVVLVMVIIGVGLVILLI. Over 690–789 the chain is Cytoplasmic; the sequence is RYQKCIKMKQ…DSQSDCTRLG (100 aa). Positions 762–771 are enriched in basic and acidic residues; sequence DPRGIADPKQ. A disordered region spans residues 762 to 789; the sequence is DPRGIADPKQNDNMNLNLDSQSDCTRLG. Residues 772–789 show a composition bias toward polar residues; sequence NDNMNLNLDSQSDCTRLG.

As to quaternary structure, interacts with ITM2B in sperm; the interaction increases following capacitation. Interacts with HSPA5 and CANX. As to expression, expressed specifically in the caput region of the epididymis (at protein level).

The protein resides in the membrane. Functionally, required for normal male fertility via maintenance of epithelial cell morphology in the caput epididymis and subsequently correct epididymis lumen structure required for sperm development. Plays a role in sperm motility, flagella morphology and tyrosine phosphorylation during sperm capacitance. Plays a role in normal expression levels of HSPA5, ITM2B and ADAM2 in sperm both prior to and post-capacitation. This is a non catalytic metalloprotease-like protein. This Rattus norvegicus (Rat) protein is Disintegrin and metalloproteinase domain-containing protein 7.